Consider the following 382-residue polypeptide: tRNA (guanine(37)-N(1))-methyltransferase (382 aa).

Residues histidine 205, 243–244 (DL), 269–270 (DA), and asparagine 291 contribute to the S-adenosyl-L-methionine site.

The protein belongs to the class I-like SAM-binding methyltransferase superfamily. TRM5/TYW2 family. As to quaternary structure, monomer.

The protein resides in the mitochondrion matrix. Its subcellular location is the nucleus. It localises to the cytoplasm. It carries out the reaction guanosine(37) in tRNA + S-adenosyl-L-methionine = N(1)-methylguanosine(37) in tRNA + S-adenosyl-L-homocysteine + H(+). Specifically methylates the N1 position of guanosine-37 in various cytoplasmic and mitochondrial tRNAs. Methylation is not dependent on the nature of the nucleoside 5' of the target nucleoside. This is the first step in the biosynthesis of wybutosine (yW), a modified base adjacent to the anticodon of tRNAs and required for accurate decoding. In Entamoeba histolytica (strain ATCC 30459 / HM-1:IMSS / ABRM), this protein is tRNA (guanine(37)-N(1))-methyltransferase.